The following is a 96-amino-acid chain: Large ribosomal subunit protein uL23 (96 aa).

It belongs to the universal ribosomal protein uL23 family. In terms of assembly, part of the 50S ribosomal subunit. Contacts protein L29, and trigger factor when it is bound to the ribosome.

Functionally, one of the early assembly proteins it binds 23S rRNA. One of the proteins that surrounds the polypeptide exit tunnel on the outside of the ribosome. Forms the main docking site for trigger factor binding to the ribosome. The sequence is that of Large ribosomal subunit protein uL23 from Brevibacillus brevis (strain 47 / JCM 6285 / NBRC 100599).